A 522-amino-acid polypeptide reads, in one-letter code: Target of rapamycin complex 2 subunit MAPKAP1 (522 aa).

Ala2 carries the N-acetylalanine modification. The interaction with MAP3K2 stretch occupies residues 2–184; sequence AFLDNPTIIL…KKIDVYLPLH (183 aa). Positions 2–267 are interaction with NBN; the sequence is AFLDNPTIIL…GFSTLALVEK (266 aa). The segment at 38-59 is disordered; it reads LEKTHPPSVPGDSGSEVQGSSG. Position 86 is a phosphothreonine; by PKB/AKT1 and RPS6KB1 (Thr86). At Ser128 the chain carries Phosphoserine; by PKC. The CRIM domain occupies 139-267; it reads QSILSVRLEQ…GFSTLALVEK (129 aa). Phosphoserine is present on residues Ser186, Ser315, and Ser356. The interval 279-353 is SIN1-type RBD; that stretch reads LFVRINAAHG…QNAWEFCLVR (75 aa). Residues 382-487 form the SIN1-type PH domain; the sequence is HYKSFKVSMI…IVLKVNYILE (106 aa). A 1,2-diacyl-sn-glycero-3-phospho-(1D-myo-inositol-3,4,5-trisphosphate) is bound at residue Arg393. Thr398 carries the phosphothreonine; by RPS6KB1 modification. Lys428 and Lys464 together coordinate a 1,2-diacyl-sn-glycero-3-phospho-(1D-myo-inositol-3,4,5-trisphosphate). The segment at 468–522 is interaction with ATF2; that stretch reads FESDAATVSEIVLKVNYILESRASTARADYLAQKQRKLNRRTSFSFQKEKKSGQQ. At Ser510 the chain carries Phosphoserine.

The protein belongs to the SIN1 family. In terms of assembly, component of the mechanistic target of rapamycin complex 2 (mTORC2), consisting in two heterotretramers composed of MTOR, MLST8, RICTOR and MAPKAP1/SIN1. The mTORC2 core complex associates with PRR5/PROTOR1 and/or PRR5L/PROTOR2. Contrary to mTORC1, mTORC2 does not bind to and is not sensitive to FKBP12-rapamycin. Interacts with MAP3K2. Interacts with ATF2. Interacts with MAPK8. Interacts with GTP-bound HRAS and KRAS; inhibiting their activity. Interacts with IFNAR2. Phosphorylation at Ser-128 by PKC promotes relocalization to the perinuclear region, where the mTORC2 complex specifically mediates phosphorylation of SGK1. Phosphorylated at Thr-86 by AKT1 or RPS6KB1 in the presence of growth factors; the effect of this phosphorylation is however unclear. According to two studies, phosphorylation at Thr-86 by AKT1 is part of a positive feedback loop that increases mTORC2 activation. According to another study, phosphorylation at Thr-86 and Thr-398 by RPS6KB1 promotes dissociation from the mTORC2 complex, leading to inhibit mTORC2 signaling. In terms of tissue distribution, uniquitously expressed, with highest levels in testis, kidney and liver. Present in renal tubule cells (at protein level).

It is found in the cell membrane. The protein localises to the endoplasmic reticulum membrane. Its subcellular location is the early endosome membrane. The protein resides in the late endosome membrane. It localises to the lysosome membrane. It is found in the golgi apparatus membrane. The protein localises to the mitochondrion outer membrane. Its subcellular location is the cytoplasm. The protein resides in the perinuclear region. It localises to the nucleus. With respect to regulation, phosphatidylinositol 3,4,5-trisphosphate (PI(3,4,5)P3) promotes MTOR activation by relieving MAPKAP1/SIN1-mediated inhibition of MTOR that takes place in absence of PI(3,4,5)P3. Component of the mechanistic target of rapamycin complex 2 (mTORC2), which transduces signals from growth factors to pathways involved in proliferation, cytoskeletal organization, lipogenesis and anabolic output. In response to growth factors, mTORC2 phosphorylates and activates AGC protein kinase family members, including AKT (AKT1, AKT2 and AKT3), PKC (PRKCA, PRKCB and PRKCE) and SGK1. In contrast to mTORC1, mTORC2 is nutrient-insensitive. Within the mTORC2 complex, MAPKAP1/SIN1 acts as a substrate adapter which recognizes and binds AGC protein kinase family members for phosphorylation by MTOR. mTORC2 plays a critical role in AKT1 activation by mediating phosphorylation of different sites depending on the context, such as 'Thr-450', 'Ser-473', 'Ser-477' or 'Thr-479', facilitating the phosphorylation of the activation loop of AKT1 on 'Thr-308' by PDPK1/PDK1 which is a prerequisite for full activation. mTORC2 catalyzes the phosphorylation of SGK1 at 'Ser-422' and of PRKCA on 'Ser-657'. The mTORC2 complex also phosphorylates various proteins involved in insulin signaling, such as FBXW8 and IGF2BP1. mTORC2 acts upstream of Rho GTPases to regulate the actin cytoskeleton, probably by activating one or more Rho-type guanine nucleotide exchange factors. mTORC2 promotes the serum-induced formation of stress-fibers or F-actin. MAPKAP1 inhibits MAP3K2 by preventing its dimerization and autophosphorylation. Inhibits HRAS and KRAS independently of mTORC2 complex. Enhances osmotic stress-induced phosphorylation of ATF2 and ATF2-mediated transcription. Involved in ciliogenesis, regulates cilia length through its interaction with CCDC28B independently of mTORC2 complex. This chain is Target of rapamycin complex 2 subunit MAPKAP1, found in Mus musculus (Mouse).